The following is a 1059-amino-acid chain: Carbamoyl phosphate synthase large chain (1059 aa).

The segment at 1 to 401 is carboxyphosphate synthetic domain; it reads MPKRKDIQKI…SLLKACRSLE (401 aa). Positions 129, 169, 175, 176, 208, 210, 215, 241, 242, 243, 284, and 298 each coordinate ATP. Residues 133–327 form the ATP-grasp 1 domain; the sequence is KQLMEELGQP…IAKLAAKIAV (195 aa). Residues Gln-284, Glu-298, and Asn-300 each coordinate Mg(2+). The Mn(2+) site is built by Gln-284, Glu-298, and Asn-300. An oligomerization domain region spans residues 402-546; sequence VGVDHNELPA…YSTYGFENES (145 aa). The segment at 547–929 is carbamoyl phosphate synthetic domain; sequence VKSSKESVLV…ALYKAFEASY (383 aa). Residues 671–861 enclose the ATP-grasp 2 domain; the sequence is EQALKELDIP…MAQVATRLIL (191 aa). ATP-binding residues include Arg-707, Ser-746, Ile-748, Glu-752, Gly-777, Val-778, His-779, Ser-780, Gln-820, and Glu-832. The Mg(2+) site is built by Gln-820, Glu-832, and Asn-834. Residues Gln-820, Glu-832, and Asn-834 each coordinate Mn(2+). The MGS-like domain maps to 930-1059; sequence LHLPNFGNVV…ESRSFTTEAI (130 aa). An allosteric domain region spans residues 930 to 1059; it reads LHLPNFGNVV…ESRSFTTEAI (130 aa).

It belongs to the CarB family. In terms of assembly, composed of two chains; the small (or glutamine) chain promotes the hydrolysis of glutamine to ammonia, which is used by the large (or ammonia) chain to synthesize carbamoyl phosphate. Tetramer of heterodimers (alpha,beta)4. Requires Mg(2+) as cofactor. Mn(2+) is required as a cofactor.

The catalysed reaction is hydrogencarbonate + L-glutamine + 2 ATP + H2O = carbamoyl phosphate + L-glutamate + 2 ADP + phosphate + 2 H(+). It carries out the reaction hydrogencarbonate + NH4(+) + 2 ATP = carbamoyl phosphate + 2 ADP + phosphate + 2 H(+). The protein operates within amino-acid biosynthesis; L-arginine biosynthesis; carbamoyl phosphate from bicarbonate: step 1/1. It participates in pyrimidine metabolism; UMP biosynthesis via de novo pathway; (S)-dihydroorotate from bicarbonate: step 1/3. In terms of biological role, large subunit of the glutamine-dependent carbamoyl phosphate synthetase (CPSase). CPSase catalyzes the formation of carbamoyl phosphate from the ammonia moiety of glutamine, carbonate, and phosphate donated by ATP, constituting the first step of 2 biosynthetic pathways, one leading to arginine and/or urea and the other to pyrimidine nucleotides. The large subunit (synthetase) binds the substrates ammonia (free or transferred from glutamine from the small subunit), hydrogencarbonate and ATP and carries out an ATP-coupled ligase reaction, activating hydrogencarbonate by forming carboxy phosphate which reacts with ammonia to form carbamoyl phosphate. The polypeptide is Carbamoyl phosphate synthase large chain (Streptococcus gordonii (strain Challis / ATCC 35105 / BCRC 15272 / CH1 / DL1 / V288)).